A 122-amino-acid chain; its full sequence is Histone H2B type 2-K1 (122 aa).

Residues 1–30 (MSAEYGQRQQPGGRGGRSSGNKKSKKRCRR) are disordered. Residues 20-30 (GNKKSKKRCRR) show a composition bias toward basic residues. The residue at position 31 (Lys-31) is an N6-(2-hydroxyisobutyryl)lysine; alternate. Lys-31 carries the N6-(beta-hydroxybutyryl)lysine; alternate modification. Position 31 is an N6-crotonyllysine; alternate (Lys-31). Lys-31 carries the post-translational modification N6-glutaryllysine; alternate. Position 31 is an N6-succinyllysine; alternate (Lys-31). Lys-31 participates in a covalent cross-link: Glycyl lysine isopeptide (Lys-Gly) (interchain with G-Cter in ubiquitin); alternate. A Phosphoserine modification is found at Ser-33. An N6-(2-hydroxyisobutyryl)lysine; alternate mark is found at Lys-40, Lys-43, and Lys-54. Lys-40 and Lys-43 each carry N6-glutaryllysine; alternate. Position 40 is an N6-lactoyllysine; alternate (Lys-40). An N6-methyllysine modification is found at Lys-43. The residue at position 43 (Lys-43) is an N6-methyllysine; alternate. At Lys-54 the chain carries N6,N6-dimethyllysine. Lys-54 is modified (N6,N6-dimethyllysine; alternate). Arg-76 bears the Dimethylated arginine mark. Ser-81 bears the Phosphoserine mark. Omega-N-methylarginine occurs at positions 83 and 89. N6-(2-hydroxyisobutyryl)lysine; alternate is present on Lys-105. Lys-105 bears the N6-glutaryllysine; alternate mark. The residue at position 105 (Lys-105) is an N6-lactoyllysine; alternate. At Lys-105 the chain carries N6-methyllysine. Lys-105 carries the N6-methyllysine; alternate modification. O-linked (GlcNAc) serine glycosylation occurs at Ser-109. Thr-112 carries the phosphothreonine modification. N6-(2-hydroxyisobutyryl)lysine; alternate occurs at positions 113 and 117. Lys-113 and Lys-117 each carry N6-(beta-hydroxybutyryl)lysine; alternate. Lys-113 and Lys-117 each carry N6-glutaryllysine; alternate. 2 positions are modified to N6-succinyllysine; alternate: Lys-113 and Lys-117. Lys-113 bears the N6-lactoyllysine; alternate mark. Lys-113 carries the N6-malonyllysine; alternate modification. An N6-methylated lysine; alternate modification is found at Lys-113. Lys-117 participates in a covalent cross-link: Glycyl lysine isopeptide (Lys-Gly) (interchain with G-Cter in ubiquitin); alternate.

Belongs to the histone H2B family. As to quaternary structure, the nucleosome is a histone octamer containing two molecules each of H2A, H2B, H3 and H4 assembled in one H3-H4 heterotetramer and two H2A-H2B heterodimers. The octamer wraps approximately 147 bp of DNA.

The protein resides in the chromosome. Its subcellular location is the nucleus. In terms of biological role, core component of nucleosome. Nucleosomes wrap and compact DNA into chromatin, limiting DNA accessibility to the cellular machineries which require DNA as a template. Histones thereby play a central role in transcription regulation, DNA repair, DNA replication and chromosomal stability. DNA accessibility is regulated via a complex set of post-translational modifications of histones, also called histone code, and nucleosome remodeling. The chain is Histone H2B type 2-K1 from Homo sapiens (Human).